An 876-amino-acid chain; its full sequence is Alanine--tRNA ligase (876 aa).

Lys74 is subject to N6-acetyllysine. Zn(2+) contacts are provided by His564, His568, Cys666, and His670.

It belongs to the class-II aminoacyl-tRNA synthetase family. Homotetramer. Zn(2+) is required as a cofactor.

It localises to the cytoplasm. The enzyme catalyses tRNA(Ala) + L-alanine + ATP = L-alanyl-tRNA(Ala) + AMP + diphosphate. Functionally, catalyzes the attachment of alanine to tRNA(Ala) in a two-step reaction: alanine is first activated by ATP to form Ala-AMP and then transferred to the acceptor end of tRNA(Ala). Also edits incorrectly charged Ser-tRNA(Ala) and Gly-tRNA(Ala) via its editing domain. The protein is Alanine--tRNA ligase of Shigella sonnei (strain Ss046).